Consider the following 341-residue polypeptide: Gibberellin 2-beta-dioxygenase 2 (341 aa).

Residues 179-283 form the Fe2OG dioxygenase domain; sequence KSDSCLRLNH…RISMIYFGGP (105 aa). The Fe cation site is built by His-207, Asp-209, and His-264. Arg-274 is a catalytic residue. Arg-274 contacts 2-oxoglutarate.

Belongs to the iron/ascorbate-dependent oxidoreductase family. GA2OX subfamily. Fe(2+) is required as a cofactor. Preferentially expressed in flowers, siliques, and upper stems. Expressed in cotyledons, at the base of the shoot apical meristem and developing leaf primordia.

It carries out the reaction gibberellin A1 + 2-oxoglutarate + O2 = gibberellin A8 + succinate + CO2. It functions in the pathway plant hormone biosynthesis; gibberellin biosynthesis. In terms of biological role, catalyzes the 2-beta-hydroxylation of several biologically active gibberellins, leading to the homeostatic regulation of their endogenous level. Catabolism of gibberellins (GAs) plays a central role in plant development. Converts GA9/GA20 to GA51/GA29 and GA4/GA1 to GA34/GA8. The protein is Gibberellin 2-beta-dioxygenase 2 (GA2OX2) of Arabidopsis thaliana (Mouse-ear cress).